The sequence spans 254 residues: Pyruvate aldolase (254 aa).

Histidine 48 acts as the Proton acceptor in catalysis. 2 residues coordinate a divalent metal cation: glutamate 151 and aspartate 177.

It belongs to the HpcH/HpaI aldolase family. A divalent metal cation serves as cofactor.

The catalysed reaction is D-glyceraldehyde + pyruvate = 2-dehydro-3-deoxy-L-galactonate. Functionally, aldolase which can catalyze in vitro the aldolisation reaction between pyruvate (PA) and D-glyceraldehyde (D-GA) to form 2-dehydro-3-deoxy-L-galactonate. This Rhizobium etli (strain ATCC 51251 / DSM 11541 / JCM 21823 / NBRC 15573 / CFN 42) protein is Pyruvate aldolase.